The chain runs to 448 residues: MEGSKTSSSTMQVSFVCQRCSQPLKLDTSFKILDRVTIQELTAPLLATAQVKPGETQEEEANPGEEPFIETRQDGVSRRFIPPARMMSTESANSFTLIGEASDGGTMENLSRRLKVTGDLFDIMSGQTDVDHPLCEECTDTLLDQLDTQLNVTENECQNYKRCLEILEQMHEDDSEQLRMELRELALEEERLIQELEEVEKNRKIVAENLEKVQAEAERLDQEEAQYQREYSEFKRQQLELDDELKSVENQMRYAQMQLDKLKKTNVFNATFHIWHSGQFGTINNFRLGRLPSVPVEWNEINAAWGQTVLLLHALANKMGLKFQRYRLVPYGNHSYLESLTDKSKELPLYCSGGLRFFWDNKFDHAMVAFLDCVQQFKEEVEKGETRFCLPYRMDVEKGKIEDTGGSGGSYSIKTQFNSEEQWTKALKFMLTNLKWGLAWVSSQFYNK.

Met1 is subject to N-acetylmethionine. A phosphoserine mark is found at Ser14 and Ser29. A phosphoserine; by AMPK mark is found at Ser88, Ser91, and Ser94. Residues Thr106–Ser125 carry the BH3 motif. The interval Leu110–Cys157 is interaction with BCL2 and BCL2L1. The residue at position 117 (Thr117) is a Phosphothreonine; by DAPK1. The stretch at Asp140–Val267 forms a coiled coil. The segment at Asp243 to Lys448 is evolutionary conserved domain (ECD). Glycyl lysine isopeptide (Lys-Gly) (interchain with G-Cter in ubiquitin) cross-links involve residues Lys400 and Lys435. The required for membrane-association stretch occupies residues Trp423–Lys448.

Belongs to the beclin family. In terms of assembly, a homodimeric form is proposed to exist; this metastable form readily transits to ATG14- or UVRAG-containing complexes with BECN1:UVRAG being more stable than BECN1:ATG14. Component of the PI3K (PI3KC3/PI3K-III/class III phosphatidylinositol 3-kinase) complex the core of which is composed of the catalytic subunit PIK3C3, the regulatory subunit PIK3R4 and BECN1 associating with additional regulatory/auxiliary subunits to form alternative complex forms. Alternative complex forms containing a fourth regulatory subunit in a mutually exclusive manner are PI3K complex I (PI3KC3-C1) containing ATG14, and PI3K complex II (PI3KC3-C2) containing UVRAG. PI3KC3-C1 displays a V-shaped architecture with PIK3R4 serving as a bridge between PIK3C3 and the ATG14:BECN1 subcomplex. Both, PI3KC3-C1 and PI3KC3-C2, can associate with further regulatory subunits, such as RUBCN, SH3GLB1/Bif-1 and AMBRA1. PI3KC3-C1 probably associates with PIK3CB. Forms a complex with PPP2CA and AMBRA1; AMBRA1 and BECN1 components of the complex regulate MYC stability via different pathways. Component of the complex, at least composed of LRPPRC, BECN1 and BCL2; the interactions prevent BECN1 from forming an autophagy-inducing complex with PIK3C3. Interacts with AMBRA1, GOPC, GRID2. Interacts with BCL2 and BCL2L1 isoform Bcl-X(L); the interaction inhibits BECN1 function in promoting autophagy by interfering with the formation of the PI3K complex. Interacts with cytosolic HMGB1; inhibits the interaction of BECN1 and BCL2 leading to promotion of autophagy. Interacts with USP10, USP13, VMP1, DAPK1, RAB39A. Interacts with the poly-Gln domain of ATXN3; the interaction causes deubiquitination at Lys-400 and stabilizes BECN1. Interacts with SLAMF1. Interacts with TRIM5; the interaction causes activation of BECN1 by causing its dissociation from its inhibitors BCL2 and TAB2. Interacts with active ULK1 (phosphorylated on 'Ser-317') and MEFV simultaneously. Interacts with WDR81 and WDR91; negatively regulates the PI3 kinase/PI3K activity associated with endosomal membranes. Interacts with LAPTM4B; competes with EGFR for LAPTM4B binding; regulates EGFR activity. Interacts with TRIM50. Interacts with TRIM16. Interacts with ATG14; this interaction is increased in the absence of TMEM39A. Interacts with WASHC1; preventing interaction with AMBRA1 and the DCX(AMBRA1) complex and subsequent ubiquitination. Interacts with TRIM17. Interacts with BCL2L10/BCL-B (via BH1 domain). Interacts with SH3BGRL. Interacts with IRGM; enhancing BECN1-interacting partners and influencing the composition of the BECN1 complex. Interacts with ARMC3. Interacts with LRPPRC. As to quaternary structure, (Microbial infection) Interacts with African swine fever virus (ASFV) apoptosis regulator Bcl-2 homolog; this interaction allows the virus to inhibit BECN1, and thus autophagy. In terms of processing, phosphorylation at Thr-117 by DAPK1 reduces its interaction with BCL2 and BCL2L1 and promotes induction of autophagy. In response to autophagic stimuli, phosphorylated at serine residues by AMPK in an ATG14-dependent manner, and this phosphorylation is critical for maximally efficient autophagy. Polyubiquitinated by NEDD4, both with 'Lys-11'- and 'Lys-63'-linkages. 'Lys-11'-linked polyubiquitination leads to degradation and is enhanced when the stabilizing interaction partner VPS34 is depleted. Deubiquitinated by USP10 and USP13, leading to stabilize the PIK3C3/VPS34-containing complexes. Polyubiquitinated at Lys-400 with 'Lys-48'-linkages. 'Lys-48'-linked polyubiquitination of Lys-400 leads to degradation. Deubiquitinated by ATXN3, leading to stabilization. Ubiquitinated at Lys-435 via 'Lys-63'-linkage by the DCX(AMBRA1) complex, thereby increasing the association between BECN1 and PIK3C3 to promote PIK3C3 activity. 'Lys-48'-linked ubiquitination by RNF216 leads to proteasomal degradation and autophagy inhibition. Post-translationally, proteolytically processed by caspases including CASP8 and CASP3; the C-terminal fragments lack autophagy-inducing capacity and are proposed to induce apoptosis. Thus the cleavage is proposed to be an determinant to switch from autophagy to apoptosis pathways affecting cellular homeostasis including viral infections and survival of tumor cells.

The protein localises to the cytoplasm. It is found in the golgi apparatus. The protein resides in the trans-Golgi network membrane. Its subcellular location is the endosome membrane. It localises to the endoplasmic reticulum membrane. The protein localises to the mitochondrion membrane. It is found in the cytoplasmic vesicle. The protein resides in the autophagosome. Its subcellular location is the mitochondrion. It localises to the nucleus. Plays a central role in autophagy. Acts as a core subunit of the PI3K complex that mediates formation of phosphatidylinositol 3-phosphate; different complex forms are believed to play a role in multiple membrane trafficking pathways: PI3KC3-C1 is involved in initiation of autophagosomes and PI3KC3-C2 in maturation of autophagosomes and endocytosis. Involved in regulation of degradative endocytic trafficking and required for the abscission step in cytokinesis, probably in the context of PI3KC3-C2. Essential for the formation of PI3KC3-C2 but not PI3KC3-C1 PI3K complex forms. Involved in endocytosis. May play a role in antiviral host defense. Its function is as follows. Beclin-1-C 35 kDa localized to mitochondria can promote apoptosis; it induces the mitochondrial translocation of BAX and the release of proapoptotic factors. The chain is Beclin-1 (BECN1) from Sus scrofa (Pig).